The following is a 343-amino-acid chain: Fructose-1,6-bisphosphatase class 1 (343 aa).

Residues glutamate 99, aspartate 121, leucine 123, and aspartate 124 each coordinate Mg(2+). Residues 124–127 (DGSS), asparagine 218, tyrosine 250, and lysine 283 each bind substrate. Glutamate 289 contributes to the Mg(2+) binding site.

It belongs to the FBPase class 1 family. Homotetramer. Requires Mg(2+) as cofactor.

The protein resides in the cytoplasm. The enzyme catalyses beta-D-fructose 1,6-bisphosphate + H2O = beta-D-fructose 6-phosphate + phosphate. The protein operates within carbohydrate biosynthesis; gluconeogenesis. In Leptospira biflexa serovar Patoc (strain Patoc 1 / Ames), this protein is Fructose-1,6-bisphosphatase class 1.